A 535-amino-acid chain; its full sequence is T-complex protein 1 subunit zeta 2 (535 aa).

The protein belongs to the TCP-1 chaperonin family. Heterooligomeric complex of about 850 to 900 kDa that forms two stacked rings, 12 to 16 nm in diameter.

It is found in the cytoplasm. In terms of biological role, molecular chaperone; assists the folding of proteins upon ATP hydrolysis. Known to play a role, in vitro, in the folding of actin and tubulin. The protein is T-complex protein 1 subunit zeta 2 of Arabidopsis thaliana (Mouse-ear cress).